Here is an 86-residue protein sequence, read N- to C-terminus: Cytochrome c oxidase subunit 6B1 (86 aa).

The residue at position 2 (A2) is an N-acetylalanine. The CHCH domain occupies 27–73 (TRNCWQNYLDFHRCQKAMTAKGGDISVCEWYQRVYQSLCPTSWVTDW). A Cx9C motif motif is present at residues 30–40 (CWQNYLDFHRC). 2 disulfides stabilise this stretch: C30–C65 and C40–C54. Positions 54–65 (CEWYQRVYQSLC) match the Cx10C motif motif.

Belongs to the cytochrome c oxidase subunit 6B family. Component of the cytochrome c oxidase (complex IV, CIV), a multisubunit enzyme composed of 14 subunits. The complex is composed of a catalytic core of 3 subunits MT-CO1, MT-CO2 and MT-CO3, encoded in the mitochondrial DNA, and 11 supernumerary subunits COX4I1 (or COX4I2), COX5A, COX5B, COX6A1 (or COX6A2), COX6B1 (or COX6B2), COX6C, COX7A2 (or COX7A1), COX7B, COX7C, COX8A and NDUFA4, which are encoded in the nuclear genome. The complex exists as a monomer or a dimer and forms supercomplexes (SCs) in the inner mitochondrial membrane with NADH-ubiquinone oxidoreductase (complex I, CI) and ubiquinol-cytochrome c oxidoreductase (cytochrome b-c1 complex, complex III, CIII), resulting in different assemblies (supercomplex SCI(1)III(2)IV(1) and megacomplex MCI(2)III(2)IV(2)).

The protein resides in the mitochondrion inner membrane. It participates in energy metabolism; oxidative phosphorylation. Component of the cytochrome c oxidase, the last enzyme in the mitochondrial electron transport chain which drives oxidative phosphorylation. The respiratory chain contains 3 multisubunit complexes succinate dehydrogenase (complex II, CII), ubiquinol-cytochrome c oxidoreductase (cytochrome b-c1 complex, complex III, CIII) and cytochrome c oxidase (complex IV, CIV), that cooperate to transfer electrons derived from NADH and succinate to molecular oxygen, creating an electrochemical gradient over the inner membrane that drives transmembrane transport and the ATP synthase. Cytochrome c oxidase is the component of the respiratory chain that catalyzes the reduction of oxygen to water. Electrons originating from reduced cytochrome c in the intermembrane space (IMS) are transferred via the dinuclear copper A center (CU(A)) of subunit 2 and heme A of subunit 1 to the active site in subunit 1, a binuclear center (BNC) formed by heme A3 and copper B (CU(B)). The BNC reduces molecular oxygen to 2 water molecules using 4 electrons from cytochrome c in the IMS and 4 protons from the mitochondrial matrix. This chain is Cytochrome c oxidase subunit 6B1 (COX6B1), found in Homo sapiens (Human).